Here is a 197-residue protein sequence, read N- to C-terminus: Nucleoside triphosphate pyrophosphatase (197 aa).

Aspartate 72 acts as the Proton acceptor in catalysis.

It belongs to the Maf family. It depends on a divalent metal cation as a cofactor.

The protein localises to the cytoplasm. The enzyme catalyses a ribonucleoside 5'-triphosphate + H2O = a ribonucleoside 5'-phosphate + diphosphate + H(+). The catalysed reaction is a 2'-deoxyribonucleoside 5'-triphosphate + H2O = a 2'-deoxyribonucleoside 5'-phosphate + diphosphate + H(+). In terms of biological role, nucleoside triphosphate pyrophosphatase. May have a dual role in cell division arrest and in preventing the incorporation of modified nucleotides into cellular nucleic acids. In Corynebacterium glutamicum (strain R), this protein is Nucleoside triphosphate pyrophosphatase.